A 262-amino-acid polypeptide reads, in one-letter code: Lectin (262 aa).

An N-terminal signal peptide occupies residues 1–21 (MASSVLLVLSLFLVLLLTQAS). Residues Asn-53, Asn-82, Asn-100, Asn-129, and Asn-205 are each glycosylated (N-linked (GlcNAc...) asparagine).

The protein belongs to the leguminous lectin family.

Its function is as follows. This metalloglycoprotein, containing Ca(2+), Mn(2+), binds glycoconjugates containing terminal non-reducing alpha-D-GalNAc residues. This is Lectin from Phaseolus lunatus (Lima bean).